The following is a 779-amino-acid chain: Kazrin (779 aa).

Positions 79–261 (AQVLLREEVV…LATLTKDVPK (183 aa)) form a coiled coil. The segment at 295–366 (QQTLYHSHPP…PGPVQKSLHN (72 aa)) is disordered. Ser356, Ser371, and Ser391 each carry phosphoserine. The segment at 403–429 (KSLDPGLFDDSDSQCSPTRHSLSLSEG) is disordered. The segment covering 415–426 (SQCSPTRHSLSL) has biased composition (polar residues). SAM domains are found at residues 450–515 (WKAG…YRDA), 528–592 (DHHW…LYQV), and 616–683 (WTNQ…STIF). A disordered region spans residues 685-779 (PSNSTGIRES…GYGSLEVTNV (95 aa)). A compositionally biased stretch (basic and acidic residues) spans 736–746 (SSKEPDFHDDY).

It belongs to the kazrin family. As to expression, expressed in skin interfollicular epidermis and hair follicles. Expressed in tongue epithelium basal suprabasal layers.

It localises to the cell junction. The protein resides in the nucleus. The protein localises to the cytoplasm. Its subcellular location is the cytoskeleton. In terms of biological role, component of the cornified envelope of keratinocytes. May be involved in the interplay between adherens junctions and desmosomes. The function in the nucleus is not known. This is Kazrin (Kazn) from Mus musculus (Mouse).